Consider the following 136-residue polypeptide: Small ribosomal subunit protein uS9 (136 aa).

The protein belongs to the universal ribosomal protein uS9 family.

This chain is Small ribosomal subunit protein uS9, found in Borreliella afzelii (strain PKo) (Borrelia afzelii).